The chain runs to 563 residues: IQCJ-SCHIP1 readthrough transcript protein (563 aa).

The IQ domain maps to 47–67; that stretch reads ESKVKIIQRAWREYLQRQEPL. Disordered regions lie at residues 63-150, 164-295, 312-336, and 384-430; these read RQEP…VSAL, VIDE…EPPV, FREQEVRNQGQARTNSTSAQKNERE, and SGSD…SLDD. Positions 76-87 are enriched in low complexity; that stretch reads SVSSEKLSSSVS. A compositionally biased stretch (polar residues) spans 88–97; sequence MNTFSDSSTP. Positions 108–143 are enriched in low complexity; the sequence is SDAGSSSSSSRASSQSNSTKVTPCSECKSSSSPGGS. The span at 168 to 182 shows a compositional bias: acidic residues; sequence WAPEEDGEEEEEEDE. Composition is skewed to basic and acidic residues over residues 183–199 and 229–238; these read RDQRGYRDDRSPAREPG and HQHDPQDLRH. The residue at position 193 (serine 193) is a Phosphoserine. Polar residues predominate over residues 318–331; that stretch reads RNQGQARTNSTSAQ. Positions 385–399 are enriched in basic and acidic residues; it reads GSDKDSDADDSKTET. The segment covering 400–411 has biased composition (polar residues); it reads SLDTPLSPMSKQ. The tract at residues 419–563 is required for interaction with ankyrins; sequence DTTEEESESL…KHMAEKMPAK (145 aa). Over residues 420–430 the composition is skewed to acidic residues; it reads TTEEESESLDD. A coiled-coil region spans residues 500 to 534; it reads IGQLQVIVNDLHSQIESLNEELVQLLLIRDELHTE.

As to quaternary structure, homooligomer (via coiled coil domain). Interacts (via IQ domain) with calmodulin; the interaction is direct and lost in presence of calcium. Interacts with ANK3 (via ANK repeats); required for localization at axon initial segments (AIS) and nodes of Ranvier. Interacts with SPTBN4. Interacts with KCNQ2 and KCNQ3. As to expression, highly expressed in brain and to a lower extent in heart and kidney.

The protein localises to the cell projection. Its subcellular location is the axon. It is found in the cytoplasm. In terms of biological role, may play a role in action potential conduction in myelinated cells through the organization of molecular complexes at nodes of Ranvier and axon initial segments. May also play a role in axon outgrowth and guidance. This Homo sapiens (Human) protein is IQCJ-SCHIP1 readthrough transcript protein.